The following is a 317-amino-acid chain: 2,3,4,5-tetrahydropyridine-2,6-dicarboxylate N-succinyltransferase (317 aa).

Mg(2+) is bound by residues D166 and E183. The active-site Acyl-anhydride intermediate is the E199. Succinyl-CoA is bound by residues R201, G216, S219, A242, 257–258 (EA), G265, K277, and 290–293 (RRNS).

This sequence belongs to the type 2 tetrahydrodipicolinate N-succinyltransferase family. As to quaternary structure, homotrimer.

The protein localises to the cytoplasm. The catalysed reaction is (S)-2,3,4,5-tetrahydrodipicolinate + succinyl-CoA + H2O = (S)-2-succinylamino-6-oxoheptanedioate + CoA. Its pathway is amino-acid biosynthesis; L-lysine biosynthesis via DAP pathway; LL-2,6-diaminopimelate from (S)-tetrahydrodipicolinate (succinylase route): step 1/3. Catalyzes the conversion of the cyclic tetrahydrodipicolinate (THDP) into the acyclic N-succinyl-L-2-amino-6-oxopimelate using succinyl-CoA. The chain is 2,3,4,5-tetrahydropyridine-2,6-dicarboxylate N-succinyltransferase (dapD) from Mycobacterium tuberculosis (strain CDC 1551 / Oshkosh).